The sequence spans 488 residues: Probable glycine dehydrogenase (decarboxylating) subunit 2 (488 aa).

Lysine 274 carries the N6-(pyridoxal phosphate)lysine modification.

The protein belongs to the GcvP family. C-terminal subunit subfamily. In terms of assembly, the glycine cleavage system is composed of four proteins: P, T, L and H. In this organism, the P 'protein' is a heterodimer of two subunits. Pyridoxal 5'-phosphate is required as a cofactor.

It carries out the reaction N(6)-[(R)-lipoyl]-L-lysyl-[glycine-cleavage complex H protein] + glycine + H(+) = N(6)-[(R)-S(8)-aminomethyldihydrolipoyl]-L-lysyl-[glycine-cleavage complex H protein] + CO2. In terms of biological role, the glycine cleavage system catalyzes the degradation of glycine. The P protein binds the alpha-amino group of glycine through its pyridoxal phosphate cofactor; CO(2) is released and the remaining methylamine moiety is then transferred to the lipoamide cofactor of the H protein. This Listeria monocytogenes serotype 4a (strain HCC23) protein is Probable glycine dehydrogenase (decarboxylating) subunit 2.